A 282-amino-acid polypeptide reads, in one-letter code: UPF0294 protein VIBHAR_03217 (282 aa).

The protein belongs to the UPF0294 family.

Its subcellular location is the cytoplasm. In Vibrio campbellii (strain ATCC BAA-1116), this protein is UPF0294 protein VIBHAR_03217.